The chain runs to 512 residues: Neuronal acetylcholine receptor subunit alpha-3 (512 aa).

Positions 1–23 are cleaved as a signal peptide; the sequence is MNSASRITLFFLLTVLITQECLS. The Extracellular segment spans residues 24-242; the sequence is SKGEDRLFRR…PLFYTINLII (219 aa). Asparagine 47 and asparagine 164 each carry an N-linked (GlcNAc...) asparagine glycan. 2 cysteine pairs are disulfide-bonded: cysteine 151/cysteine 165 and cysteine 215/cysteine 216. Residues 243–258 form a helical membrane-spanning segment; sequence PCLLISFLTILVFYLP. Over 259-260 the chain is Cytoplasmic; sequence SD. Residues 261 to 277 traverse the membrane as a helical segment; that stretch reads CGEKVTLCISVLLSLTV. Residue glutamate 263 participates in Na(+) binding. The Extracellular segment spans residues 278-299; that stretch reads FLLVITETIPSTSLVIPLIGEY. The helical transmembrane segment at 300–318 threads the bilayer; the sequence is LLFTMIFVTLSIVITVFVL. Topologically, residues 319-482 are cytoplasmic; that stretch reads NVHYRTPMTH…EDDWKYVAMV (164 aa). The tract at residues 356 to 389 is disordered; that stretch reads ESSGKGGGEIAGSSGTGGGRGAEGKKMKSSASQQ. A compositionally biased stretch (gly residues) spans 359-376; the sequence is GKGGGEIAGSSGTGGGRG. A helical transmembrane segment spans residues 483-501; sequence IDRIFLWVFVLVCVLGTLG. Over 502-512 the chain is Extracellular; sequence LFLQPLIGFFS.

The protein belongs to the ligand-gated ion channel (TC 1.A.9) family. Acetylcholine receptor (TC 1.A.9.1) subfamily. Alpha-3/CHRNA3 sub-subfamily. In terms of assembly, neuronal AChR is composed of two different types of subunits: alpha and beta. CHRNA3/Alpha-3 subunit can be combined to CHRNB2/beta-2 or CHRNB4/beta-4 to give rise to functional receptors. Expressed in retina and brain.

Its subcellular location is the synaptic cell membrane. The protein resides in the cell membrane. It is found in the endoplasmic reticulum. The protein localises to the golgi apparatus. The catalysed reaction is K(+)(in) = K(+)(out). The enzyme catalyses Na(+)(in) = Na(+)(out). It catalyses the reaction Ca(2+)(in) = Ca(2+)(out). With respect to regulation, activated by a myriad of ligands such as acetylcholine, cytisine, nicotine, choline and epibatidine. The heteropentamer CHRNA3:CHRNB2 activity is blocked by alpha-conotoxins ImI, ImII, PnIA, GID and MII. The heteropentamer CHRNA3:CHRNB4 activity is blocked by the alpha-conotoxin ImI and AuIB. Component of neuronal acetylcholine receptors (nAChRs) that function as pentameric, ligand-gated cation channels with high calcium permeability among other activities. nAChRs are excitatory neurotrasnmitter receptors formed by a collection of nAChR subunits known to mediate synaptic transmission in the nervous system and the neuromuscular junction. Each nAchR subunit confers differential attributes to channel properties, including activation, deactivation and desensitization kinetics, pH sensitivity, cation permeability, and binding to allosteric modulators. CHRNA3 forms heteropentameric neuronal acetylcholine receptors with CHRNB2 and CHRNB4. CHRNA3:CHRNB4 being predominant in neurons of the autonomic ganglia, it is known as ganglionic nicotinic receptor. CHRNA3:CHRNB4 also plays an important role in the habenulo-interpeduncular tract, modulating the mesolimbic dopamine system and affecting reward circuits and addiction. Hypothalamic CHRNA3:CHRNB4 nAChR activation by nicotine leads to activation of POMC neurons and a decrease in food intake. Also expressed in the urothelium where it modulates reflex bladder activity by increasing intracellular calcium through extracellular influx and basal ATP release. The sequence is that of Neuronal acetylcholine receptor subunit alpha-3 (chrna3) from Carassius auratus (Goldfish).